Reading from the N-terminus, the 652-residue chain is Tetracycline resistance protein TetP (652 aa).

The region spanning 2-252 (KKIINIGIVA…CSYFPFASND (251 aa)) is the tr-type G domain. GTP contacts are provided by residues 11-18 (AHVDAGKT), 75-79 (DTPGH), and 129-132 (NKLD).

The protein belongs to the TRAFAC class translation factor GTPase superfamily. Classic translation factor GTPase family. TetM/TetO subfamily.

Its function is as follows. Abolishes the inhibitory effect of tetracyclin on protein synthesis by a non-covalent modification of the ribosomes. This chain is Tetracycline resistance protein TetP (tetP), found in Clostridium perfringens.